The chain runs to 603 residues: ADP-ribosylation factor-binding protein GGA2 (603 aa).

The tract at residues 1-22 (MAATAVAAGTGSPAGTESAEGG) is disordered. The segment covering 13 to 22 (PAGTESAEGG) has biased composition (low complexity). The VHS domain maps to 36 to 166 (ATDPSMAEQD…MLKKQGIIKQ (131 aa)). In terms of domain architecture, GAT spans 190-317 (DEEKSKLLTR…GVRLYKQVVE (128 aa)). The tract at residues 318-473 (GRVSAGNAVP…VFVPLESVKP (156 aa)) is unstructured hinge. The 122-residue stretch at 474-595 (SSLPPIVVYD…SEVGEVKDFP (122 aa)) folds into the GAE domain.

This sequence belongs to the GGA protein family. As to quaternary structure, monomer. Interacts with NECAP1, TSG101, UBC and AFTPH/aftiphilin. Interacts with CNST. Interacts with GGA1 and GGA3. Binds to clathrin and activated ARFs, such as ARF1, ARF5 and ARF6. Binds RABEP1 and RABGEF1. Interacts with the type-I membrane proteins LRP3, M6PR/CD-MPR, IGF2R/CI-MPR and BACE1. Interacts (via N-terminal VHS domain) with SORL1/sorLA and SORT1 (via C-terminal cytosolic domain). Binds the accessory proteins CCDC91, P200, SYNRG, EPN4 and NECAP2. Interacts with ADRA2B. Interacts (via VHS domain) with PIK4B; the interaction is important for PIK4B location at the Golgi apparatus membrane. Ubiquitinated.

It is found in the golgi apparatus. The protein localises to the trans-Golgi network membrane. It localises to the endosome membrane. Its subcellular location is the early endosome membrane. In terms of biological role, plays a role in protein sorting and trafficking between the trans-Golgi network (TGN) and endosomes. Mediates the ARF-dependent recruitment of clathrin to the TGN and binds ubiquitinated proteins and membrane cargo molecules with a cytosolic acidic cluster-dileucine (DXXLL) motif. Mediates export of the GPCR receptor ADRA2B to the cell surface. Regulates retrograde transport of phosphorylated form of BACE1 from endosomes to the trans-Golgi network. The chain is ADP-ribosylation factor-binding protein GGA2 (Gga2) from Mus musculus (Mouse).